A 326-amino-acid chain; its full sequence is Putative ABC transporter ATP-binding protein MPN_334 (326 aa).

The ABC transporter domain occupies 7-239 (VEVKHLEKEF…NFGYRLKVNN (233 aa)). Residue 42 to 49 (GQNGAGKT) participates in ATP binding.

It belongs to the ABC transporter superfamily.

This is Putative ABC transporter ATP-binding protein MPN_334 from Mycoplasma pneumoniae (strain ATCC 29342 / M129 / Subtype 1) (Mycoplasmoides pneumoniae).